We begin with the raw amino-acid sequence, 300 residues long: Probable alpha-L-glutamate ligase (300 aa).

The ATP-grasp domain maps to 104 to 287; sequence LQLLARQGID…IAGRMIEYIE (184 aa). Residues Lys-141, 178–179, Asp-187, and 211–213 contribute to the ATP site; these read EY and RSN. Residues Asp-248, Glu-260, and Asn-262 each contribute to the Mg(2+) site. Mn(2+)-binding residues include Asp-248, Glu-260, and Asn-262.

This sequence belongs to the RimK family. It depends on Mg(2+) as a cofactor. The cofactor is Mn(2+).

The sequence is that of Probable alpha-L-glutamate ligase from Serratia proteamaculans (strain 568).